We begin with the raw amino-acid sequence, 365 residues long: G-protein coupled receptor 68 (365 aa).

The Extracellular portion of the chain corresponds to 1-12 (MGNITTENSSLS). 2 N-linked (GlcNAc...) asparagine glycosylation sites follow: N3 and N8. A helical transmembrane segment spans residues 13–49 (CPIDHTIHQTLAPVVYVTVLVVGFPANCLSLYFGYLQ). 2 disulfide bridges follow: C13/C258 and C94/C172. Residues 50 to 53 (IKAR) are Cytoplasmic-facing. Residues 54–84 (NELGVYLCNLTIADLFYICSLPFWLQYVLQH) form a helical membrane-spanning segment. The Extracellular segment spans residues 85 to 89 (DDWSH). Residues 90 to 125 (GDLSCQVCGILLYENIYISVGFLCCISIDRYLAVAH) traverse the membrane as a helical segment. The Cytoplasmic portion of the chain corresponds to 126 to 133 (PFRFHQFR). The chain crosses the membrane as a helical span at residues 134–160 (TLKAAVGVSVLIWAKELLTSIYFLNHK). The Extracellular segment spans residues 161–176 (EVIEDEDQHRVCFEHY). The segment at 161-176 (EVIEDEDQHRVCFEHY) is extracellular loop 2 (ECL2). A helical transmembrane segment spans residues 177 to 214 (PIQAWQRSINYYRFLVGFLFPICLLLASYQGILRAVRR). The Cytoplasmic portion of the chain corresponds to 215–218 (SHGT). The helical transmembrane segment at 219-254 (QKSRKDQIQRLVLSTVVIFLACFLPYHVLLLVRSLW) threads the bilayer. The Extracellular portion of the chain corresponds to 255 to 260 (ERNCEF). A helical membrane pass occupies residues 261 to 289 (AKSIFNVYHFSLLLTSFNCVADPVLYCFV). Residues 290-365 (SETTHRDLAR…VGGPSTVGLA (76 aa)) are Cytoplasmic-facing.

The protein belongs to the G-protein coupled receptor 1 family. Expressed in the lung, testis, heart, brain, spleen, thymus, brown fat, small intestine, colon, peripheral blood leukocytes, macrophages, stomach, ovary and white fat but not in the liver, kidney, and skeletal muscle. Expression in the prostate is weak but detectable. Specifically expressed in endothelial cells of small-diameter resistance arteries.

It is found in the cell membrane. Activated by a network of residues that connects an extracellular-facing cavity to Glu-149, a conserved charged residue buried in the transmembrane core of the receptor. Protonation likely drives conformational changes in extracellular loop 2 (ECL2), which stabilizes movement of transmembrane 3 (TM3) and a series of rearrangements that connect the extracellular-facing cavity to Glu-149, a residue only conserved in proton-sensing G-protein coupled receptors. Activated in an allosteric manner by divalent metal ions at the extracellular surface following the order: Cd(2+) &gt; Co(2+) &gt; Ni(2+) &gt; Zn(2+) &gt; Fe(2+) &gt; Ca(2+) &gt; Mg(2+). Activated by ogerin (ZINC67740571), a selective GPR68 positive allosteric modulator. Inhibited by small molecule GPR68-I, decreasing inflammation in models of colitis. In terms of biological role, proton-sensing G-protein coupled receptor activated by extracellular pH, which is required to monitor pH changes and generate adaptive reactions. The receptor is almost silent at pH 7.8 but fully activated at pH 6.8. Ligand binding causes a conformation change that triggers signaling via guanine nucleotide-binding proteins (G proteins) and modulates the activity of downstream effectors, such as phospholipase C. GPR68 is mainly coupled to G(q) G proteins and mediates production of diacylglycerol (DAG) and inositol 1,4,5-trisphosphate (IP3). Acts as a key mechanosensor of fluid shear stress and membrane stretch. Expressed in endothelial cells of small-diameter resistance arteries, where it mediates flow-induced dilation in response to shear stress. May represents an osteoblastic pH sensor regulating cell-mediated responses to acidosis in bone. Acts as a regulator of calcium-sensing receptor CASR in a seesaw manner: GPR68-mediated signaling inhibits CASR signaling in response to protons, while CASR inhibits GPR68 in presence of extracellular calcium. Also functions as a metastasis suppressor gene in prostate cancer. The polypeptide is G-protein coupled receptor 68 (Mus musculus (Mouse)).